A 42-amino-acid chain; its full sequence is Conodipine-M beta chain (42 aa).

In terms of assembly, heterodimer of an alpha and a beta chains; probably disulfide-linked. As to expression, expressed by the venom duct.

Its subcellular location is the secreted. Functionally, heterodimer: conodipine-M catalyzes the calcium-dependent hydrolysis of the 2-acyl groups in 3-sn-phosphoglycerides. This activity may be supported by the alpha chain. Conodipine-M inhibits the binding of isradipine (a ligand specific for L-type calcium channel) to L-type calcium channels. This is Conodipine-M beta chain from Conus magus (Magical cone).